The chain runs to 557 residues: E3 ubiquitin-protein ligase ARIH1 (557 aa).

A compositionally biased stretch (acidic residues) spans 1 to 47 (MDSDEGYNYEFDEDEECSEEDSGAEEEEDEDDDEPDDDTLDLGEVEL). The disordered stretch occupies residues 1–95 (MDSDEGYNYE…GGGGGPGHEQ (95 aa)). Gly residues predominate over residues 65 to 92 (ETGGGGGSALGPGGGGGGGGGGGGGGPG). The segment at 105–153 (TAEQILQHMVECIREVNEVIQNPATITRILLSHFNWDKEKLMERYFDGN) is UBA-like. The residue at position 142 (K142) is an N6-acetyllysine. A TRIAD supradomain region spans residues 182–393 (QDMPCQICYL…SAWYNCNRYN (212 aa)). Zn(2+)-binding residues include C186, C189, C203, H205, C208, C211, C231, C236, C276, C281, C297, C299, C304, C307, H312, C317, C344, and C347. The RING-type 1 zinc-finger motif lies at 186-236 (CQICYLNYPNSYFTGLECGHKFCMQCWSEYLTTKIMEEGMGQTISCPAHGC). Residues 256–317 (LKYQHLITNS…GENWHDPVKC (62 aa)) form an IBR-type zinc finger. The segment at 344 to 375 (CPKCHVTIEKDGGCNHMVCRNQNCKAEFCWVC) adopts an RING-type 2; atypical zinc-finger fold. C357 is an active-site residue. Positions 362, 367, 372, 375, 382, and 389 each coordinate Zn(2+). Residues 408–557 (RAALQRYLFY…EKDLWEYIED (150 aa)) are ariadne domain.

This sequence belongs to the RBR family. Ariadne subfamily. Interacts (via the first RING-type zinc finger) with UBE2L3. Associates with cullin-RING ubiquitin ligase (CRL) complexes containing CUL1, CUL2 and CUL3. Interacts with neddylated CUL1. Interacts with neddylated CUL2. Interacts with neddylated CUL3. Interacts with neddylated CUL4A. As to expression, widely expressed.

The protein resides in the cytoplasm. It is found in the nucleus. The protein localises to the cajal body. The enzyme catalyses [E2 ubiquitin-conjugating enzyme]-S-ubiquitinyl-L-cysteine + [acceptor protein]-L-lysine = [E2 ubiquitin-conjugating enzyme]-L-cysteine + [acceptor protein]-N(6)-ubiquitinyl-L-lysine.. It functions in the pathway protein modification; protein ubiquitination. Autoinhibited by the ariadne domain, which masks the second RING-type zinc finger that contains the active site and inhibits the E3 activity. Inhibition is relieved upon binding to neddylated cullin-RING ubiquitin ligase complexes, which activate the E3 ligase activity of ARIH1. In terms of biological role, E3 ubiquitin-protein ligase, which catalyzes ubiquitination of target proteins together with ubiquitin-conjugating enzyme E2 UBE2L3. Acts as an atypical E3 ubiquitin-protein ligase by working together with cullin-RING ubiquitin ligase (CRL) complexes and initiating ubiquitination of CRL substrates: associates with CRL complexes and specifically mediates addition of the first ubiquitin on CRLs targets. The initial ubiquitin is then elongated by CDC34/UBE2R1 and UBE2R2. E3 ubiquitin-protein ligase activity is activated upon binding to neddylated cullin-RING ubiquitin ligase complexes. Plays a role in protein translation in response to DNA damage by mediating ubiquitination of EIF4E2, the consequences of EIF4E2 ubiquitination are however unclear. According to a report, EIF4E2 ubiquitination leads to promote EIF4E2 cap-binding and protein translation arrest. According to another report EIF4E2 ubiquitination leads to its subsequent degradation. Acts as the ligase involved in ISGylation of EIF4E2. In vitro, controls the degradation of the LINC (LInker of Nucleoskeleton and Cytoskeleton) complex member SUN2 and may therefore have a role in the formation and localization of the LINC complex, and as a consequence, nuclear subcellular localization and nuclear morphology. The protein is E3 ubiquitin-protein ligase ARIH1 of Homo sapiens (Human).